A 61-amino-acid polypeptide reads, in one-letter code: Small ribosomal subunit protein uS14B (61 aa).

Residues cysteine 24, cysteine 27, cysteine 40, and cysteine 43 each contribute to the Zn(2+) site.

It belongs to the universal ribosomal protein uS14 family. Zinc-binding uS14 subfamily. In terms of assembly, part of the 30S ribosomal subunit. Contacts proteins S3 and S10. The cofactor is Zn(2+).

In terms of biological role, binds 16S rRNA, required for the assembly of 30S particles and may also be responsible for determining the conformation of the 16S rRNA at the A site. The chain is Small ribosomal subunit protein uS14B from Mycobacterium bovis (strain ATCC BAA-935 / AF2122/97).